The primary structure comprises 205 residues: Small ribosomal subunit protein uS4 (205 aa).

Residues 19-45 (IWGRPKSPVNRREYGPGQHGQRRKGKL) are disordered. An S4 RNA-binding domain is found at 94 to 157 (SRLDAVVYRA…KQLVIVLEAV (64 aa)).

The protein belongs to the universal ribosomal protein uS4 family. As to quaternary structure, part of the 30S ribosomal subunit. Contacts protein S5. The interaction surface between S4 and S5 is involved in control of translational fidelity.

One of the primary rRNA binding proteins, it binds directly to 16S rRNA where it nucleates assembly of the body of the 30S subunit. Functionally, with S5 and S12 plays an important role in translational accuracy. This Brucella anthropi (strain ATCC 49188 / DSM 6882 / CCUG 24695 / JCM 21032 / LMG 3331 / NBRC 15819 / NCTC 12168 / Alc 37) (Ochrobactrum anthropi) protein is Small ribosomal subunit protein uS4.